A 231-amino-acid polypeptide reads, in one-letter code: Cytochrome c oxidase subunit 2 (231 aa).

Residues 1 to 30 (MNNFFQGYNLLFQHSLFASYMDWFHSFNCS) are Mitochondrial intermembrane-facing. The helical transmembrane segment at 31–52 (LLLGVLVFVTLLFGYLIFGTFY) threads the bilayer. Residues 53–69 (FKSKKIEYQFGELLCSI) lie on the Mitochondrial matrix side of the membrane. A helical membrane pass occupies residues 70 to 89 (FPTIILLMQMVPSLSLLYYY). Residues 90 to 231 (GLMNLDSNLT…FKSWCFGTME (142 aa)) lie on the Mitochondrial intermembrane side of the membrane. 6 residues coordinate Cu cation: His164, Cys199, Glu201, Cys203, His207, and Met210. A Mg(2+)-binding site is contributed by Glu201.

The protein belongs to the cytochrome c oxidase subunit 2 family. Component of the cytochrome c oxidase (complex IV, CIV), a multisubunit enzyme composed of a catalytic core of 3 subunits and several supernumerary subunits. The complex exists as a monomer or a dimer and forms supercomplexes (SCs) in the inner mitochondrial membrane with ubiquinol-cytochrome c oxidoreductase (cytochrome b-c1 complex, complex III, CIII). Cu cation is required as a cofactor.

The protein resides in the mitochondrion inner membrane. The catalysed reaction is 4 Fe(II)-[cytochrome c] + O2 + 8 H(+)(in) = 4 Fe(III)-[cytochrome c] + 2 H2O + 4 H(+)(out). Functionally, component of the cytochrome c oxidase, the last enzyme in the mitochondrial electron transport chain which drives oxidative phosphorylation. The respiratory chain contains 3 multisubunit complexes succinate dehydrogenase (complex II, CII), ubiquinol-cytochrome c oxidoreductase (cytochrome b-c1 complex, complex III, CIII) and cytochrome c oxidase (complex IV, CIV), that cooperate to transfer electrons derived from NADH and succinate to molecular oxygen, creating an electrochemical gradient over the inner membrane that drives transmembrane transport and the ATP synthase. Cytochrome c oxidase is the component of the respiratory chain that catalyzes the reduction of oxygen to water. Electrons originating from reduced cytochrome c in the intermembrane space (IMS) are transferred via the dinuclear copper A center (CU(A)) of subunit 2 and heme A of subunit 1 to the active site in subunit 1, a binuclear center (BNC) formed by heme A3 and copper B (CU(B)). The BNC reduces molecular oxygen to 2 water molecules using 4 electrons from cytochrome c in the IMS and 4 protons from the mitochondrial matrix. This Caenorhabditis elegans protein is Cytochrome c oxidase subunit 2.